The primary structure comprises 294 residues: MFKGSIVALITPMNEEGEICHSSLKKLIDYHVLNKTKAIVSIGTTGESATLSQEEHIEVVMLTLKLANKRIPIIAGTGANATTEAISLTKRFEKSGIEACLTVTPYYNKPTQEGLYQHFKAISENTKLPQILYNVPSRTGCDLLPSTVARLSEFKNIIGIKEATGDLSRIHKIKKLVKDDFLLISGDDPTALDFIQLGGQGVISVTANIAAKEMTQMCSYALEGNFKSARSINERLMLLHESLFIEPNPIPIKWLAKKIGLIKSDTLRLPMTPILNSTRTQIEKALQYANLQKI.

T45 serves as a coordination point for pyruvate. The active-site Proton donor/acceptor is the Y133. The Schiff-base intermediate with substrate role is filled by K161. I203 is a pyruvate binding site.

This sequence belongs to the DapA family. In terms of assembly, homotetramer; dimer of dimers.

It is found in the cytoplasm. The enzyme catalyses L-aspartate 4-semialdehyde + pyruvate = (2S,4S)-4-hydroxy-2,3,4,5-tetrahydrodipicolinate + H2O + H(+). It functions in the pathway amino-acid biosynthesis; L-lysine biosynthesis via DAP pathway; (S)-tetrahydrodipicolinate from L-aspartate: step 3/4. Its function is as follows. Catalyzes the condensation of (S)-aspartate-beta-semialdehyde [(S)-ASA] and pyruvate to 4-hydroxy-tetrahydrodipicolinate (HTPA). In Buchnera aphidicola subsp. Schizaphis graminum (strain Sg), this protein is 4-hydroxy-tetrahydrodipicolinate synthase.